A 367-amino-acid chain; its full sequence is Quinolinate synthase (367 aa).

Residues histidine 45 and serine 62 each coordinate iminosuccinate. Cysteine 109 provides a ligand contact to [4Fe-4S] cluster. Residues 140-142 and serine 161 each bind iminosuccinate; that span reads YVN. Cysteine 229 is a binding site for [4Fe-4S] cluster. Residues 255–257 and threonine 272 each bind iminosuccinate; that span reads HPE. Residue cysteine 319 coordinates [4Fe-4S] cluster.

Belongs to the quinolinate synthase family. Type 3 subfamily. The cofactor is [4Fe-4S] cluster.

The protein resides in the cytoplasm. It catalyses the reaction iminosuccinate + dihydroxyacetone phosphate = quinolinate + phosphate + 2 H2O + H(+). Its pathway is cofactor biosynthesis; NAD(+) biosynthesis; quinolinate from iminoaspartate: step 1/1. Catalyzes the condensation of iminoaspartate with dihydroxyacetone phosphate to form quinolinate. The sequence is that of Quinolinate synthase from Halalkalibacterium halodurans (strain ATCC BAA-125 / DSM 18197 / FERM 7344 / JCM 9153 / C-125) (Bacillus halodurans).